A 142-amino-acid polypeptide reads, in one-letter code: MAKKIDGYIKLQVPAGKANPSPPIGPALGQRGVNIMAFCKEFNAATQKLEVGLPIPVVITVYNDKSFTFIMKTPPASILLKKAAGIQKGSSVPNKTKVGKLTRAQLEEIATTKEPDLTGADLDARVRTIAGSARSMGLEVEL.

The protein belongs to the universal ribosomal protein uL11 family. Part of the ribosomal stalk of the 50S ribosomal subunit. Interacts with L10 and the large rRNA to form the base of the stalk. L10 forms an elongated spine to which L12 dimers bind in a sequential fashion forming a multimeric L10(L12)X complex. One or more lysine residues are methylated.

Forms part of the ribosomal stalk which helps the ribosome interact with GTP-bound translation factors. This chain is Large ribosomal subunit protein uL11, found in Acinetobacter baylyi (strain ATCC 33305 / BD413 / ADP1).